The following is a 317-amino-acid chain: Melanocyte-stimulating hormone receptor (317 aa).

Over 1 to 37 the chain is Extracellular; the sequence is MPVQGSQRRLLGSLNSTPTATPHLGLAANQTGARCLE. An N-linked (GlcNAc...) asparagine glycan is attached at N29. A helical membrane pass occupies residues 38-63; sequence VSVPDGLFLSLGLVSLVENVLVVTAI. The Cytoplasmic portion of the chain corresponds to 64-72; that stretch reads AKNRNLHSP. A helical membrane pass occupies residues 73–93; sequence MYCFICCLALSDLLVSGSNML. The Extracellular segment spans residues 94–118; the sequence is ETAVTLLLEAGALAARAAVVQQLDN. Residues 119–140 traverse the membrane as a helical segment; the sequence is VIDVITCSSMLSSLCFLGAIAV. At 141 to 163 the chain is on the cytoplasmic side; sequence DRYISIFYALRYHSIVTLPRARR. A helical transmembrane segment spans residues 164–183; the sequence is AVAAIWVASVLFSTLFIAYY. Topologically, residues 184–191 are extracellular; sequence DHAAVLLC. The chain crosses the membrane as a helical span at residues 192–211; it reads LVIFFLAMLVLMAVLYVHML. Topologically, residues 212–240 are cytoplasmic; sequence ARACQHAQGIARLHKRQRLAHQGFGLKGA. Residues 241–266 traverse the membrane as a helical segment; that stretch reads ATLTILLGIFFLCWGPFFLHLTLIVL. Residues 267–279 lie on the Extracellular side of the membrane; the sequence is CPQHPTCSCIFKN. The helical transmembrane segment at 280–300 threads the bilayer; the sequence is FNLFLALIICNAIIDPLIYAF. Topologically, residues 301-317 are cytoplasmic; the sequence is RSQELRRTLKEVLLCSW. The S-palmitoyl cysteine moiety is linked to residue C315.

Belongs to the G-protein coupled receptor 1 family. Interacts with MGRN1, but does not undergo MGRN1-mediated ubiquitination; this interaction competes with GNAS-binding and thus inhibits agonist-induced cAMP production. Interacts with OPN3; the interaction results in a decrease in MC1R-mediated cAMP signaling and ultimately a decrease in melanin production in melanocytes.

The protein localises to the cell membrane. Its function is as follows. Receptor for MSH (alpha, beta and gamma) and ACTH. The activity of this receptor is mediated by G proteins which activate adenylate cyclase. Mediates melanogenesis, the production of eumelanin (black/brown) and phaeomelanin (red/yellow), via regulation of cAMP signaling in melanocytes. The polypeptide is Melanocyte-stimulating hormone receptor (MC1R) (Papio hamadryas (Hamadryas baboon)).